Consider the following 230-residue polypeptide: Biosynthetic peptidoglycan transglycosylase (230 aa).

Residues 11–31 form a helical membrane-spanning segment; sequence VLLVLVALFVLYQLWIFTLVL.

Belongs to the glycosyltransferase 51 family.

Its subcellular location is the cell inner membrane. It catalyses the reaction [GlcNAc-(1-&gt;4)-Mur2Ac(oyl-L-Ala-gamma-D-Glu-L-Lys-D-Ala-D-Ala)](n)-di-trans,octa-cis-undecaprenyl diphosphate + beta-D-GlcNAc-(1-&gt;4)-Mur2Ac(oyl-L-Ala-gamma-D-Glu-L-Lys-D-Ala-D-Ala)-di-trans,octa-cis-undecaprenyl diphosphate = [GlcNAc-(1-&gt;4)-Mur2Ac(oyl-L-Ala-gamma-D-Glu-L-Lys-D-Ala-D-Ala)](n+1)-di-trans,octa-cis-undecaprenyl diphosphate + di-trans,octa-cis-undecaprenyl diphosphate + H(+). It participates in cell wall biogenesis; peptidoglycan biosynthesis. In terms of biological role, peptidoglycan polymerase that catalyzes glycan chain elongation from lipid-linked precursors. The sequence is that of Biosynthetic peptidoglycan transglycosylase from Aromatoleum aromaticum (strain DSM 19018 / LMG 30748 / EbN1) (Azoarcus sp. (strain EbN1)).